Consider the following 567-residue polypeptide: Glucose-6-phosphate isomerase, cytosolic B (567 aa).

D-glucose 6-phosphate contacts are provided by residues 156 to 157, 212 to 217, Gln356, Glu360, His391, and Lys516; these read GS and SKTFTT. Glu360 (proton donor) is an active-site residue. Active-site residues include His391 and Lys516.

This sequence belongs to the GPI family. In terms of assembly, homodimer.

Its subcellular location is the cytoplasm. The enzyme catalyses alpha-D-glucose 6-phosphate = beta-D-fructose 6-phosphate. Its pathway is carbohydrate degradation; glycolysis; D-glyceraldehyde 3-phosphate and glycerone phosphate from D-glucose: step 2/4. Its function is as follows. Catalyzes the conversion of glucose-6-phosphate to fructose-6-phosphate, the second step in glycolysis, and the reverse reaction during gluconeogenesis. This chain is Glucose-6-phosphate isomerase, cytosolic B, found in Oryza sativa subsp. japonica (Rice).